The primary structure comprises 519 residues: Cytosol aminopeptidase (519 aa).

Ser-42 is subject to Phosphoserine. Lys-45 bears the N6-succinyllysine mark. Phosphoserine is present on Ser-54. N6-succinyllysine occurs at positions 61 and 103. Phosphoserine occurs at positions 180 and 194. The Zn(2+) site is built by Leu-202, Met-203, and Thr-205. Residue Ser-238 is modified to Phosphoserine. Residues Lys-282 and Asp-287 each contribute to the Zn(2+) site. The substrate site is built by Lys-282, Asp-287, Ser-292, and Lys-294. Asp-287 lines the Mg(2+) pocket. Lys-294 is an active-site residue. The Zn(2+) site is built by Arg-303, Asp-305, Asp-364, and Glu-366. Residues Asp-305 and Asp-364 each coordinate substrate. The Mg(2+) site is built by Asp-364 and Glu-366. Residue Arg-368 is part of the active site. Lys-455 is subject to N6-acetyllysine; alternate. An N6-succinyllysine; alternate modification is found at Lys-455. N6-succinyllysine is present on Lys-476. Lys-489 carries the N6-acetyllysine; alternate modification. At Lys-489 the chain carries N6-succinyllysine; alternate.

The protein belongs to the peptidase M17 family. Homohexamer. Zn(2+) is required as a cofactor. Requires Mn(2+) as cofactor.

The protein resides in the cytoplasm. It catalyses the reaction Release of an N-terminal amino acid, Xaa-|-Yaa-, in which Xaa is preferably Leu, but may be other amino acids including Pro although not Arg or Lys, and Yaa may be Pro. Amino acid amides and methyl esters are also readily hydrolyzed, but rates on arylamides are exceedingly low.. The catalysed reaction is an S-substituted L-cysteinylglycine + H2O = an S-substituted L-cysteine + glycine. It carries out the reaction L-cysteinylglycine + H2O = L-cysteine + glycine. The enzyme catalyses S-benzyl-L-cysteinylglycine + H2O = S-benzyl-L-cysteine + glycine. It catalyses the reaction Release of N-terminal proline from a peptide.. With respect to regulation, zofenoprilat inhibits Cys-Gly hydrolysis activity. Its function is as follows. Cytosolic metallopeptidase that catalyzes the removal of unsubstituted N-terminal hydrophobic amino acids from various peptides. The presence of Zn(2+) ions is essential for the peptidase activity, and the association with other cofactors can modulate the substrate spectificity of the enzyme. For instance, in the presence of Mn(2+), it displays a specific Cys-Gly hydrolyzing activity of Cys-Gly-S-conjugates. Involved in the metabolism of glutathione and in the degradation of glutathione S-conjugates, which may play a role in the control of the cell redox status. The protein is Cytosol aminopeptidase of Bos taurus (Bovine).